The sequence spans 143 residues: UPF0251 protein CA_C3166 (143 aa).

The protein belongs to the UPF0251 family.

The polypeptide is UPF0251 protein CA_C3166 (Clostridium acetobutylicum (strain ATCC 824 / DSM 792 / JCM 1419 / IAM 19013 / LMG 5710 / NBRC 13948 / NRRL B-527 / VKM B-1787 / 2291 / W)).